A 213-amino-acid chain; its full sequence is Adenylate kinase (213 aa).

14 to 19 (GSGKGT) lines the ATP pocket. The segment at 34–63 (STGDLLRAIIREGTPNGLKAKAYLDKGAFV) is NMP. Residues Thr-35, Arg-40, 61–63 (AFV), 89–92 (GFPR), and Gln-96 each bind AMP. Positions 129 to 162 (SRFLCPSCSRIYNTSQGHTECPDCHVPLIRRSDD) are LID. An ATP-binding site is contributed by Arg-130. The Zn(2+) site is built by Cys-133 and Cys-136. 139 to 140 (IY) is a binding site for ATP. The Zn(2+) site is built by Cys-149 and Cys-152. AMP-binding residues include Arg-159 and Arg-170. An ATP-binding site is contributed by Asn-198.

The protein belongs to the adenylate kinase family. In terms of assembly, monomer.

The protein localises to the cytoplasm. The enzyme catalyses AMP + ATP = 2 ADP. The protein operates within purine metabolism; AMP biosynthesis via salvage pathway; AMP from ADP: step 1/1. Functionally, catalyzes the reversible transfer of the terminal phosphate group between ATP and AMP. Plays an important role in cellular energy homeostasis and in adenine nucleotide metabolism. The protein is Adenylate kinase of Chlamydia pneumoniae (Chlamydophila pneumoniae).